The following is a 425-amino-acid chain: MLDLKRIRTDFDSVAEKLATRGVDAATLSQMKTIDKERRDLLVKVEELKAERNTVSAEIAQAKRNKENTDDKIAAMQKLSAEVKNLDASLAELDAKLTEFTTTLPNIPHDSVPVGADENENVEVRRWGTPHQFDFEAKAHWDLGEDLDILDWERGAKVTGARFLFYKGLGARLERAIYNFMLDEHGKEGYTEVITPYMVNHDSMFGTGQYPKFKEDTFELSDTNFVLIPTAEVPLTNYYRDEILDGKELPIYFTAMSPSFRSEAGSAGRDTRGLIRLHQFHKVEMVKFAKPEESYEELEKMTANAENILQKLNLPYRVVALCTGDMGFSAAKTYDLEVWIPAQNTYREISSCSNTEDFQARRAQIRYRDEADGKVKLLHTLNGSGLAVGRTVAAILENYQNEDGSVTIPEVLRPYMGGLEVIAPK.

Position 230 to 232 (230 to 232 (TAE)) interacts with L-serine. 261 to 263 (RSE) contacts ATP. L-serine is bound at residue glutamate 284. 348 to 351 (EISS) contacts ATP. Serine 384 is an L-serine binding site.

Belongs to the class-II aminoacyl-tRNA synthetase family. Type-1 seryl-tRNA synthetase subfamily. In terms of assembly, homodimer. The tRNA molecule binds across the dimer.

Its subcellular location is the cytoplasm. It carries out the reaction tRNA(Ser) + L-serine + ATP = L-seryl-tRNA(Ser) + AMP + diphosphate + H(+). The enzyme catalyses tRNA(Sec) + L-serine + ATP = L-seryl-tRNA(Sec) + AMP + diphosphate + H(+). It participates in aminoacyl-tRNA biosynthesis; selenocysteinyl-tRNA(Sec) biosynthesis; L-seryl-tRNA(Sec) from L-serine and tRNA(Sec): step 1/1. Catalyzes the attachment of serine to tRNA(Ser). Is also able to aminoacylate tRNA(Sec) with serine, to form the misacylated tRNA L-seryl-tRNA(Sec), which will be further converted into selenocysteinyl-tRNA(Sec). This Streptococcus sanguinis (strain SK36) protein is Serine--tRNA ligase.